A 166-amino-acid chain; its full sequence is Lithostathine-1-alpha (166 aa).

Positions 1–22 are cleaved as a signal peptide; the sequence is MAQTSSYFMLISCLMFLSQSQG. Pyrrolidone carboxylic acid is present on glutamine 23. Threonine 27 carries O-linked (GalNAc) threonine glycosylation. The C-type lectin domain occupies 34–164; that stretch reads ISCPEGTNAY…EDKFSFVCKF (131 aa). Disulfide bonds link cysteine 36–cysteine 47, cysteine 64–cysteine 162, and cysteine 137–cysteine 154.

The composition of the O-linked carbohydrate on Thr-27 is complex and varied. In the crystallographic structure, the attached sugar appears to be N-acetylglucosamine, typical of an intracellular protein, rather than N-acetylgalactosamine. As to expression, in pancreatic acinar cells and, in lower levels, in brain. Enhanced expression of PSP-related transcripts and intraneuronal accumulation of PSP-like proteins is found in brain from Alzheimer disease and Down syndrome patients.

It is found in the secreted. In terms of biological role, might act as an inhibitor of spontaneous calcium carbonate precipitation. May be associated with neuronal sprouting in brain, and with brain and pancreas regeneration. In Homo sapiens (Human), this protein is Lithostathine-1-alpha (REG1A).